A 359-amino-acid polypeptide reads, in one-letter code: Fructose-bisphosphate aldolase, cytoplasmic isozyme 2 (359 aa).

Residues Arg52 and Lys143 each coordinate substrate. The active-site Proton acceptor is Glu184. Catalysis depends on Lys226, which acts as the Schiff-base intermediate with dihydroxyacetone-P.

This sequence belongs to the class I fructose-bisphosphate aldolase family.

The protein resides in the cytoplasm. It carries out the reaction beta-D-fructose 1,6-bisphosphate = D-glyceraldehyde 3-phosphate + dihydroxyacetone phosphate. It participates in carbohydrate degradation; glycolysis; D-glyceraldehyde 3-phosphate and glycerone phosphate from D-glucose: step 4/4. The sequence is that of Fructose-bisphosphate aldolase, cytoplasmic isozyme 2 from Pisum sativum (Garden pea).